Here is a 131-residue protein sequence, read N- to C-terminus: D-ribose pyranase (131 aa).

Catalysis depends on His20, which acts as the Proton donor. Residues Asp28, His98, and Tyr120–Asn122 contribute to the substrate site.

This sequence belongs to the RbsD / FucU family. RbsD subfamily. In terms of assembly, homodecamer.

It localises to the cytoplasm. The catalysed reaction is beta-D-ribopyranose = beta-D-ribofuranose. It functions in the pathway carbohydrate metabolism; D-ribose degradation; D-ribose 5-phosphate from beta-D-ribopyranose: step 1/2. Its function is as follows. Catalyzes the interconversion of beta-pyran and beta-furan forms of D-ribose. The sequence is that of D-ribose pyranase from Enterococcus faecalis (strain ATCC 700802 / V583).